The chain runs to 166 residues: Regulatory protein RecX (166 aa).

The protein belongs to the RecX family.

Its subcellular location is the cytoplasm. In terms of biological role, modulates RecA activity. This chain is Regulatory protein RecX, found in Escherichia coli (strain K12 / MC4100 / BW2952).